The primary structure comprises 115 residues: Large ribosomal subunit protein uL18 (115 aa).

Belongs to the universal ribosomal protein uL18 family. Part of the 50S ribosomal subunit; part of the 5S rRNA/L5/L18/L25 subcomplex. Contacts the 5S and 23S rRNAs.

This is one of the proteins that bind and probably mediate the attachment of the 5S RNA into the large ribosomal subunit, where it forms part of the central protuberance. This is Large ribosomal subunit protein uL18 from Mycoplasma genitalium (strain ATCC 33530 / DSM 19775 / NCTC 10195 / G37) (Mycoplasmoides genitalium).